We begin with the raw amino-acid sequence, 274 residues long: 2,3,4,5-tetrahydropyridine-2,6-dicarboxylate N-succinyltransferase (274 aa).

It belongs to the transferase hexapeptide repeat family.

The protein localises to the cytoplasm. It catalyses the reaction (S)-2,3,4,5-tetrahydrodipicolinate + succinyl-CoA + H2O = (S)-2-succinylamino-6-oxoheptanedioate + CoA. The protein operates within amino-acid biosynthesis; L-lysine biosynthesis via DAP pathway; LL-2,6-diaminopimelate from (S)-tetrahydrodipicolinate (succinylase route): step 1/3. The polypeptide is 2,3,4,5-tetrahydropyridine-2,6-dicarboxylate N-succinyltransferase (Proteus mirabilis (strain HI4320)).